Here is a 309-residue protein sequence, read N- to C-terminus: 2-dehydro-3-deoxygluconokinase (309 aa).

Residues 34-38 (GAEVN), Tyr89, 103-105 (YYR), and Arg167 contribute to the substrate site. ATP is bound by residues 165 to 167 (NYR), Ser193, 219 to 225 (KRGAKGA), 248 to 251 (GAGD), and Asn275. Substrate is bound at residue Asp251. The active-site Proton acceptor is Asp251. Asp287 lines the substrate pocket.

The protein belongs to the carbohydrate kinase pfkB family. As to quaternary structure, homohexamer; trimer of dimers.

It catalyses the reaction 2-dehydro-3-deoxy-D-gluconate + ATP = 2-dehydro-3-deoxy-6-phospho-D-gluconate + ADP + H(+). It functions in the pathway carbohydrate acid metabolism; 2-dehydro-3-deoxy-D-gluconate degradation; D-glyceraldehyde 3-phosphate and pyruvate from 2-dehydro-3-deoxy-D-gluconate: step 1/2. Involved in the degradation of glucose via the semi-phosphorylative Entner-Doudoroff pathway. Catalyzes the phosphorylation of 2-keto-3-deoxygluconate (KDG) to produce 2-keto-3-deoxy-6-phosphogluconate (KDPG). The chain is 2-dehydro-3-deoxygluconokinase (kdgK) from Thermus thermophilus (strain ATCC 27634 / DSM 579 / HB8).